The following is a 237-amino-acid chain: Probable transcriptional regulatory protein PSHAa1370 (237 aa).

Belongs to the TACO1 family.

The protein localises to the cytoplasm. In Pseudoalteromonas translucida (strain TAC 125), this protein is Probable transcriptional regulatory protein PSHAa1370.